A 79-amino-acid chain; its full sequence is MIMHTPIMMTTLISLTLPIFATLTNPYKKRSYPDYVKTTVMYAFITSLPSTTLFILSNQETTIWSWHWMTTQTLDLTLS.

The next 2 helical transmembrane spans lie at 5–27 and 40–57; these read TPIM…TNPY and VMYA…FILS.

Belongs to the complex I subunit 5 family. In terms of assembly, core subunit of respiratory chain NADH dehydrogenase (Complex I) which is composed of 45 different subunits.

It localises to the mitochondrion inner membrane. It catalyses the reaction a ubiquinone + NADH + 5 H(+)(in) = a ubiquinol + NAD(+) + 4 H(+)(out). Functionally, core subunit of the mitochondrial membrane respiratory chain NADH dehydrogenase (Complex I) which catalyzes electron transfer from NADH through the respiratory chain, using ubiquinone as an electron acceptor. Essential for the catalytic activity and assembly of complex I. This Macaca fascicularis (Crab-eating macaque) protein is NADH-ubiquinone oxidoreductase chain 5 (MT-ND5).